We begin with the raw amino-acid sequence, 707 residues long: Alpha-hemolysin translocation ATP-binding protein HlyB (707 aa).

Residues 3–125 form the Peptidase C39 domain; it reads SCHKIDYGLY…ALYQGHIILI (123 aa). Residue His-83 is part of the active site. The ABC transmembrane type-1 domain maps to 154 to 436; the sequence is FIETLVVSVF…LAQIWQDFQQ (283 aa). 5 helical membrane passes run 158–178, 191–211, 269–289, 295–315, and 388–408; these read LVVSVFLQLFALITPLFFQVV, LNVITVALSVVVVFEIILSGL, ALTSVLDLLFSLIFFAVMWYY, LVILFSLPCYAAWSVFISPIL, and VMIINLWLGAHLVISGDLSIG. One can recognise an ABC transporter domain in the interval 468 to 703; that stretch reads ITFRNIRFRY…PESLYSYLYQ (236 aa). 502 to 509 is a binding site for ATP; that stretch reads GRSGSGKS.

This sequence belongs to the ABC transporter superfamily. Protein-1 exporter (TC 3.A.1.109) family. Homodimer.

It is found in the cell inner membrane. Its function is as follows. Part of the ABC transporter complex HlyBD involved in hemolysin export. Transmembrane domains (TMD) form a pore in the inner membrane and the ATP-binding domain (NBD) is responsible for energy generation. The chain is Alpha-hemolysin translocation ATP-binding protein HlyB (hlyB) from Escherichia coli.